We begin with the raw amino-acid sequence, 486 residues long: ATP synthase subunit beta (486 aa).

An ATP-binding site is contributed by 170–177; that stretch reads GGAGVGKT.

It belongs to the ATPase alpha/beta chains family. In terms of assembly, F-type ATPases have 2 components, CF(1) - the catalytic core - and CF(0) - the membrane proton channel. CF(1) has five subunits: alpha(3), beta(3), gamma(1), delta(1), epsilon(1). CF(0) has three main subunits: a(1), b(2) and c(9-12). The alpha and beta chains form an alternating ring which encloses part of the gamma chain. CF(1) is attached to CF(0) by a central stalk formed by the gamma and epsilon chains, while a peripheral stalk is formed by the delta and b chains.

It localises to the cell membrane. The catalysed reaction is ATP + H2O + 4 H(+)(in) = ADP + phosphate + 5 H(+)(out). Produces ATP from ADP in the presence of a proton gradient across the membrane. The catalytic sites are hosted primarily by the beta subunits. The protein is ATP synthase subunit beta of Clavibacter sepedonicus (Clavibacter michiganensis subsp. sepedonicus).